A 113-amino-acid chain; its full sequence is U11-theraphotoxin-Hhn1q (113 aa).

The first 21 residues, 1–21 (MNTVRVTFLLVFVLAVSLGQA), serve as a signal peptide directing secretion. Residues 22–74 (DKDENRMEMQEKTEQGKSYLDFAENLLLQKLEELEAKLLEEDSEESRNSRQKR) constitute a propeptide that is removed on maturation. Positions 61 to 82 (EEDSEESRNSRQKRCIGEGVPC) are disordered. 3 cysteine pairs are disulfide-bonded: C75-C90, C82-C95, and C89-C110.

Belongs to the neurotoxin 14 (magi-1) family. 01 (HNTX-16) subfamily. As to expression, expressed by the venom gland.

The protein localises to the secreted. Functionally, probable ion channel inhibitor. This Cyriopagopus hainanus (Chinese bird spider) protein is U11-theraphotoxin-Hhn1q.